A 156-amino-acid polypeptide reads, in one-letter code: Ribosomal RNA large subunit methyltransferase H (156 aa).

S-adenosyl-L-methionine is bound by residues Leu-73, Gly-104, and 123-128; that span reads IGPLTL.

Belongs to the RNA methyltransferase RlmH family. As to quaternary structure, homodimer.

It is found in the cytoplasm. It carries out the reaction pseudouridine(1915) in 23S rRNA + S-adenosyl-L-methionine = N(3)-methylpseudouridine(1915) in 23S rRNA + S-adenosyl-L-homocysteine + H(+). Specifically methylates the pseudouridine at position 1915 (m3Psi1915) in 23S rRNA. The sequence is that of Ribosomal RNA large subunit methyltransferase H from Xanthomonas euvesicatoria pv. vesicatoria (strain 85-10) (Xanthomonas campestris pv. vesicatoria).